Consider the following 222-residue polypeptide: Ribonuclease HII (222 aa).

The RNase H type-2 domain maps to 32 to 222 (FHIAGVDEVG…LIKRYKEDIS (191 aa)). Residues Asp38, Glu39, and Asp130 each coordinate a divalent metal cation.

This sequence belongs to the RNase HII family. It depends on Mn(2+) as a cofactor. Mg(2+) serves as cofactor.

It is found in the cytoplasm. The enzyme catalyses Endonucleolytic cleavage to 5'-phosphomonoester.. Functionally, endonuclease that specifically degrades the RNA of RNA-DNA hybrids. In Bartonella bacilliformis (strain ATCC 35685 / KC583 / Herrer 020/F12,63), this protein is Ribonuclease HII.